The following is a 1098-amino-acid chain: Bifunctional helicase and thymine dioxygenase JBP2 (1098 aa).

The interval 1-540 (MLNGLTRVST…PPLFVPTRLA (540 aa)) is thymine dioxygenase. Fe cation-binding residues include His415, Asp417, and His465. Arg479 is a binding site for 2-oxoglutarate. Positions 541–1098 (SHLAPVQLAA…RYQESVRESE (558 aa)) are DNA Helicase. The Helicase ATP-binding domain maps to 555-730 (VERTEKQSGC…YRLVGWVNKG (176 aa)). 568-575 (MTMGLGKT) is an ATP binding site. Positions 681–684 (DEGH) match the DEAH box motif. Residues 897–1057 (VLVDIVLRVQ…ALPDELEDCA (161 aa)) enclose the Helicase C-terminal domain.

It in the C-terminal section; belongs to the SNF2/RAD54 helicase family. In the N-terminal section; belongs to the TET family. JBP2 subfamily. It depends on Fe(2+) as a cofactor.

The protein localises to the nucleus. The catalysed reaction is ATP + H2O = ADP + phosphate + H(+). The enzyme catalyses thymine + 2-oxoglutarate + O2 = 5-hydroxymethyluracil + succinate + CO2. Dioxygenase that catalyzes the first step of DNA base J (beta-d-glucosyl-HOMedU) biosynthesis by converting thymine to 5-hydroxymethyluracil (HOMedU). DNA base J is a hypermodified thymidine residue found in the genome of kinetoplastid parasites, which is localized primarily to repetitive DNA, namely the telomeres, and is implicated in the regulation of antigenic variation. Probably also acts as a DNA helicase. Recognizes and binds specific regions of the genome, hydrolyzes ATP and allows the DNA base J de novo synthesis. Involved in initial synthesis of DNA base J, JBP1 being able to act via the basal level of DNA base J and propagate further synthesis. In contrast to JBP1, it does not specifically bind DNA base J, however it binds chromatin. In Leishmania tarentolae (Sauroleishmania tarentolae), this protein is Bifunctional helicase and thymine dioxygenase JBP2 (JBP2).